The following is a 105-amino-acid chain: Nucleoid-associated protein Dred_0043 (105 aa).

The protein belongs to the YbaB/EbfC family. Homodimer.

It is found in the cytoplasm. Its subcellular location is the nucleoid. Functionally, binds to DNA and alters its conformation. May be involved in regulation of gene expression, nucleoid organization and DNA protection. This Desulforamulus reducens (strain ATCC BAA-1160 / DSM 100696 / MI-1) (Desulfotomaculum reducens) protein is Nucleoid-associated protein Dred_0043.